We begin with the raw amino-acid sequence, 356 residues long: NAC domain-containing protein JA2L (356 aa).

The NAC domain maps to Leu-14 to Lys-162. A DNA-binding region spans residues Val-111–Lys-168. The disordered stretch occupies residues Asn-163 to Phe-191. The span at Ser-164–Leu-174 shows a compositional bias: polar residues.

As to expression, expressed in guard cells of the epidermis.

It is found in the nucleus. Its function is as follows. Transcription factor that acts downstream of MYC2 in the jasmonate-mediated response to Botrytis cinerea infection. With MYC2 forms a transcription module that regulates wounding-responsive genes. Involved in jasmonate- and coronatine-mediated stomatal reopening in response to Pseudomonas syringae pv tomato DC3000 infection. Regulates the expression of threonine deaminase 2 (TD2) through promoter binding. The protein is NAC domain-containing protein JA2L of Solanum lycopersicum (Tomato).